We begin with the raw amino-acid sequence, 365 residues long: Cobalt-precorrin-5B C(1)-methyltransferase (365 aa).

It belongs to the CbiD family.

It catalyses the reaction Co-precorrin-5B + S-adenosyl-L-methionine = Co-precorrin-6A + S-adenosyl-L-homocysteine. It participates in cofactor biosynthesis; adenosylcobalamin biosynthesis; cob(II)yrinate a,c-diamide from sirohydrochlorin (anaerobic route): step 6/10. In terms of biological role, catalyzes the methylation of C-1 in cobalt-precorrin-5B to form cobalt-precorrin-6A. This is Cobalt-precorrin-5B C(1)-methyltransferase from Polaromonas naphthalenivorans (strain CJ2).